Consider the following 297-residue polypeptide: Calponin-1 (297 aa).

Residues 28-131 enclose the Calponin-homology (CH) domain; the sequence is HQREQELREW…STLLALASMA (104 aa). Calponin-like repeat units follow at residues 164 to 189, 204 to 229, and 243 to 268; these read IGLQ…RHLY, ISLQ…RQIF, and VSLQ…RQVY. Threonine 170 bears the Phosphothreonine; by ROCK2 mark. Serine 175 carries the phosphoserine; by ROCK2 modification. Residues threonine 180 and threonine 184 each carry the phosphothreonine; by ROCK2 modification. A Phosphothreonine; by ROCK2 modification is found at threonine 259.

The protein belongs to the calponin family. Part of cGMP kinase signaling complex at least composed of ACTA2/alpha-actin, CNN1/calponin H1, PLN/phospholamban, PRKG1 and ITPR1.

Its function is as follows. Thin filament-associated protein that is implicated in the regulation and modulation of smooth muscle contraction. It is capable of binding to actin, calmodulin and tropomyosin. The interaction of calponin with actin inhibits the actomyosin Mg-ATPase activity. This Ovis aries (Sheep) protein is Calponin-1 (CNN1).